The chain runs to 305 residues: MIKQRTLKRIVQATGVGLHTGKKVTLTLRPAPANTGVIYRRTDLNPPVDFPADAKSVRDTMLCTCLVNEHDVRISTVEHLNAALAGLGIDNIVIEVDAPEIPIMDGSAAPFVYLLLDAGIDELNCAKKFVRIKETVRVEDGDKWAEFKPYNGFTLDFTIDFNHPAIDSSSQRYAMNFSADAFMRQISRARTFGFMRDIEYLQSRGLCLGGSFDCAIVVDDYRVLNEDGLRFEDEFVRHKMLDAIGDLFMCGHNIIGAFTAYKSGHALNNKLLQAVLAKQEAWEYVTFQDDAELPLAFKAPSTVLA.

Residues histidine 79, histidine 238, and aspartate 242 each contribute to the Zn(2+) site. Histidine 265 serves as the catalytic Proton donor.

The protein belongs to the LpxC family. The cofactor is Zn(2+).

The enzyme catalyses a UDP-3-O-[(3R)-3-hydroxyacyl]-N-acetyl-alpha-D-glucosamine + H2O = a UDP-3-O-[(3R)-3-hydroxyacyl]-alpha-D-glucosamine + acetate. It participates in glycolipid biosynthesis; lipid IV(A) biosynthesis; lipid IV(A) from (3R)-3-hydroxytetradecanoyl-[acyl-carrier-protein] and UDP-N-acetyl-alpha-D-glucosamine: step 2/6. Its function is as follows. Catalyzes the hydrolysis of UDP-3-O-myristoyl-N-acetylglucosamine to form UDP-3-O-myristoylglucosamine and acetate, the committed step in lipid A biosynthesis. This Citrobacter koseri (strain ATCC BAA-895 / CDC 4225-83 / SGSC4696) protein is UDP-3-O-acyl-N-acetylglucosamine deacetylase.